We begin with the raw amino-acid sequence, 559 residues long: Glutamine--tRNA ligase (559 aa).

The 'HIGH' region signature appears at 36-46 (PEPNGYLHLGH). ATP-binding positions include 37–39 (EPN) and 43–49 (HLGHAKS). The L-glutamine site is built by Asp69 and Tyr214. ATP is bound by residues Thr233, 263–264 (RL), and 271–273 (LSK). The 'KMSKS' region signature appears at 270-274 (LLSKR).

This sequence belongs to the class-I aminoacyl-tRNA synthetase family. In terms of assembly, monomer.

The protein resides in the cytoplasm. It catalyses the reaction tRNA(Gln) + L-glutamine + ATP = L-glutaminyl-tRNA(Gln) + AMP + diphosphate. The protein is Glutamine--tRNA ligase of Nitrobacter winogradskyi (strain ATCC 25391 / DSM 10237 / CIP 104748 / NCIMB 11846 / Nb-255).